The primary structure comprises 96 residues: MARNRLTENELNEALTELDGWQKVDGREAIAKSFKFKDFNAAFGFMTRAALHAEKLDHHPEWFNVYNRVDVTLATHSENGITELDIKLARKMNAIA.

It belongs to the pterin-4-alpha-carbinolamine dehydratase family.

The catalysed reaction is (4aS,6R)-4a-hydroxy-L-erythro-5,6,7,8-tetrahydrobiopterin = (6R)-L-erythro-6,7-dihydrobiopterin + H2O. In Brucella anthropi (strain ATCC 49188 / DSM 6882 / CCUG 24695 / JCM 21032 / LMG 3331 / NBRC 15819 / NCTC 12168 / Alc 37) (Ochrobactrum anthropi), this protein is Putative pterin-4-alpha-carbinolamine dehydratase.